A 324-amino-acid polypeptide reads, in one-letter code: NAC domain-containing protein 21/22 (324 aa).

Residues 19-171 (LPPGFRFHPK…DWVLCRVFHK (153 aa)) form the NAC domain. Positions 120 to 137 (RKTLVFYQGRAPRGRKTD) match the Bipartite nuclear localization signal motif.

As to quaternary structure, dimer. Interacts with SINAT5. Ubiquitinated. The interaction with SINAT5 mediate its proteasome-dependent degradation. Predominantly expressed in the root tip and in lateral root initiation sites. Also detected in expanding cotyledon, and in leaf primordia.

It is found in the nucleus. Functionally, transcriptional activator that mediates auxin signaling to promote lateral root development. Activates the expression of two downstream auxin-responsive genes, DBP and AIR3. This Arabidopsis thaliana (Mouse-ear cress) protein is NAC domain-containing protein 21/22 (NAC021).